The following is a 169-amino-acid chain: MGLKYFAHLPLELREKIVRDHLQEERKKEFLEKAIEDSCRRHEALLIEDPSPAELNSLSKFLTALSDYVGNQFNTRCLIRWKKDVPSKVKFGFMDEQHHKLYGSMDMDDLSCGELFIPDEEDDLTYEDGVIVRCSQLDQLFKSLGIEIVYIVVSKHCIWAPLSKEIVIK.

The tract at residues 9-22 (LPLELREKIVRDHL) is binding to host SKP1 protein. Positions 110 to 114 (LSCGE) match the LXCXE motif, interaction with host RBR motif.

Belongs to the nanovirus Clink protein family. As to quaternary structure, interacts with host SKP1. Interacts (via LXCXE domain) with host retinoblastoma-related protein 1 (RBR1). Interacts (via LXCXE domain) with retinoblastoma-related proteins (RBR).

Interacts with and disrupts the function of host retinoblastoma-related proteins RBR, which are key regulators of the cell cycle. Induces transcriptional activation of E2F-regulated S-phase and G2/M-phase-specific genes. Inactivation of the ability of RBR to arrest the cell cycle leads to the stimulation of viral DNA replication. The protein is Cell cycle link protein (DNA-C) of Astragalus sinicus (Chinese milk vetch).